The primary structure comprises 62 residues: Large ribosomal subunit protein eL24 (62 aa).

Zn(2+) is bound by residues C6, C9, C32, and C36. Residues C6 to C36 form a C4-type zinc finger.

The protein belongs to the eukaryotic ribosomal protein eL24 family. As to quaternary structure, part of the 50S ribosomal subunit. Forms a cluster with proteins L3 and L14. Zn(2+) serves as cofactor.

Its function is as follows. Binds to the 23S rRNA. This is Large ribosomal subunit protein eL24 from Methanococcus maripaludis (strain C5 / ATCC BAA-1333).